Consider the following 318-residue polypeptide: Glutathione synthetase (318 aa).

The ATP-grasp domain occupies 129–314; it reads KLAITEFPDL…VPEMFAVALE (186 aa). 155-211 lines the ATP pocket; that stretch reads HAAQGDVIVKPLDGMGGTGIFRLQRSEPNLNAILETLTDNGTRTIMAQRYIPEIVKG. Glutamate 285 and asparagine 287 together coordinate Mg(2+).

The protein belongs to the prokaryotic GSH synthase family. The cofactor is Mg(2+). It depends on Mn(2+) as a cofactor.

It catalyses the reaction gamma-L-glutamyl-L-cysteine + glycine + ATP = glutathione + ADP + phosphate + H(+). The protein operates within sulfur metabolism; glutathione biosynthesis; glutathione from L-cysteine and L-glutamate: step 2/2. In Bordetella bronchiseptica (strain ATCC BAA-588 / NCTC 13252 / RB50) (Alcaligenes bronchisepticus), this protein is Glutathione synthetase.